The chain runs to 103 residues: Large ribosomal subunit protein bL21 (103 aa).

This sequence belongs to the bacterial ribosomal protein bL21 family. Part of the 50S ribosomal subunit. Contacts protein L20.

Functionally, this protein binds to 23S rRNA in the presence of protein L20. In Acinetobacter baumannii (strain AB307-0294), this protein is Large ribosomal subunit protein bL21.